We begin with the raw amino-acid sequence, 388 residues long: Succinate--CoA ligase [ADP-forming] subunit beta (388 aa).

The region spanning 9 to 244 is the ATP-grasp domain; the sequence is KQLFARYGLP…QSQEDPRAAQ (236 aa). Residues lysine 46, 53 to 55, glutamate 99, threonine 102, and glutamate 107 contribute to the ATP site; that span reads GRG. The Mg(2+) site is built by asparagine 199 and aspartate 213. Substrate is bound by residues asparagine 264 and 321-323; that span reads GIV.

Belongs to the succinate/malate CoA ligase beta subunit family. As to quaternary structure, heterotetramer of two alpha and two beta subunits. The cofactor is Mg(2+).

It carries out the reaction succinate + ATP + CoA = succinyl-CoA + ADP + phosphate. It catalyses the reaction GTP + succinate + CoA = succinyl-CoA + GDP + phosphate. The protein operates within carbohydrate metabolism; tricarboxylic acid cycle; succinate from succinyl-CoA (ligase route): step 1/1. Functionally, succinyl-CoA synthetase functions in the citric acid cycle (TCA), coupling the hydrolysis of succinyl-CoA to the synthesis of either ATP or GTP and thus represents the only step of substrate-level phosphorylation in the TCA. The beta subunit provides nucleotide specificity of the enzyme and binds the substrate succinate, while the binding sites for coenzyme A and phosphate are found in the alpha subunit. This is Succinate--CoA ligase [ADP-forming] subunit beta from Shigella flexneri serotype 5b (strain 8401).